Consider the following 687-residue polypeptide: Phage-like element PBSX protein XkdV (687 aa).

This sequence to B.subtilis YqcC.

The protein is Phage-like element PBSX protein XkdV (xkdV) of Bacillus subtilis (strain 168).